We begin with the raw amino-acid sequence, 373 residues long: Alpha-N-acetylgalactosaminide alpha-2,6-sialyltransferase 2 (373 aa).

Residues 1–6 are Cytoplasmic-facing; sequence MDLPRR. The chain crosses the membrane as a helical; Signal-anchor for type II membrane protein span at residues 7–27; the sequence is WLFRMLLLVATSSGILLMLYS. Residues 28-373 are Lumenal-facing; the sequence is SAGQQSPETQ…NAGILWLYQR (346 aa). 2 cysteine pairs are disulfide-bonded: cysteine 65–cysteine 147 and cysteine 150–cysteine 316. An N-linked (GlcNAc...) asparagine glycan is attached at asparagine 103. Asparagine 155 provides a ligand contact to CMP-N-acetyl-beta-neuraminate. Asparagine 160 carries N-linked (GlcNAc...) asparagine glycosylation. CMP-N-acetyl-beta-neuraminate is bound by residues asparagine 178, serine 303, and histidine 335.

The protein belongs to the glycosyltransferase 29 family. Highly expressed in lactating mammary gland and adult testis. Lower levels in kidney.

It is found in the golgi apparatus membrane. The enzyme catalyses a beta-D-galactosyl-(1-&gt;3)-N-acetyl-alpha-D-galactosaminyl derivative + CMP-N-acetyl-beta-neuraminate = a beta-D-galactosyl-(1-&gt;3)-[N-acetyl-alpha-neuraminyl-(2-&gt;6)]-N-acetyl-alpha-D-galactosaminyl derivative + CMP + H(+). It carries out the reaction a 3-O-[N-acetyl-alpha-D-galactosaminyl]-L-threonyl-[protein] + CMP-N-acetyl-beta-neuraminate = a 3-O-[N-acetyl-alpha-neuraminosyl-(2-&gt;6)-N-acetyl-alpha-D-galactosaminyl]-L-threonyl-[protein] + CMP + H(+). It catalyses the reaction a 3-O-[N-acetyl-alpha-neuraminyl-(2-&gt;3)-beta-D-galactosyl-(1-&gt;3)-N-acetyl-alpha-D-galactosaminyl]-L-threonyl-[protein] + CMP-N-acetyl-beta-neuraminate = a 3-O-{alpha-Neu5Ac-(2-&gt;3)-beta-D-Gal-(1-&gt;3)-[alpha-Neu5Ac-(2-&gt;6)]-alpha-D-GalNAc}-L-threonyl-[protein] + CMP + H(+). Its pathway is protein modification; protein glycosylation. Functionally, catalyzes the transfer of N-acetylneuraminyl groups onto glycan chains in glycoproteins. Conjugates sialic acid with an alpha-2-6 linkage to N-acetylgalactosamine (GalNAc) glycan chains linked to serine or threonine in glycoproteins. Sialylates alphaGalNAc- and Galbeta1-&gt;3GalNAc-O-Ser/Thr epitopes also known as Tn and T antigens. The sequence is that of Alpha-N-acetylgalactosaminide alpha-2,6-sialyltransferase 2 (St6galnac2) from Mus musculus (Mouse).